Here is a 240-residue protein sequence, read N- to C-terminus: Probable alpha-aspartyl dipeptidase (240 aa).

Residues Ser125, Asp140, and His162 each act as charge relay system in the active site.

This sequence belongs to the peptidase S51 family.

The protein resides in the cytoplasm. It catalyses the reaction Dipeptidase E catalyzes the hydrolysis of dipeptides Asp-|-Xaa. It does not act on peptides with N-terminal Glu, Asn or Gln, nor does it cleave isoaspartyl peptides.. Its function is as follows. Hydrolyzes dipeptides containing N-terminal aspartate residues. This chain is Probable alpha-aspartyl dipeptidase, found in Drosophila melanogaster (Fruit fly).